The sequence spans 339 residues: Methionyl-tRNA formyltransferase (339 aa).

110 to 113 (SLLP) serves as a coordination point for (6S)-5,6,7,8-tetrahydrofolate.

Belongs to the Fmt family.

The enzyme catalyses L-methionyl-tRNA(fMet) + (6R)-10-formyltetrahydrofolate = N-formyl-L-methionyl-tRNA(fMet) + (6S)-5,6,7,8-tetrahydrofolate + H(+). Attaches a formyl group to the free amino group of methionyl-tRNA(fMet). The formyl group appears to play a dual role in the initiator identity of N-formylmethionyl-tRNA by promoting its recognition by IF2 and preventing the misappropriation of this tRNA by the elongation apparatus. This Prochlorococcus marinus (strain SARG / CCMP1375 / SS120) protein is Methionyl-tRNA formyltransferase.